The primary structure comprises 267 residues: NAD kinase (267 aa).

The active-site Proton acceptor is the D45. NAD(+)-binding positions include 45-46 (DG), 123-124 (NE), R149, D151, A186, and N226.

This sequence belongs to the NAD kinase family. Requires a divalent metal cation as cofactor.

The protein resides in the cytoplasm. It carries out the reaction NAD(+) + ATP = ADP + NADP(+) + H(+). Involved in the regulation of the intracellular balance of NAD and NADP, and is a key enzyme in the biosynthesis of NADP. Catalyzes specifically the phosphorylation on 2'-hydroxyl of the adenosine moiety of NAD to yield NADP. This chain is NAD kinase, found in Shouchella clausii (strain KSM-K16) (Alkalihalobacillus clausii).